We begin with the raw amino-acid sequence, 288 residues long: Proline iminopeptidase (288 aa).

The region spanning 27-274 (PVIVLHGGPG…SAHMPYIEEP (248 aa)) is the AB hydrolase-1 domain. The Nucleophile role is filled by serine 101. Aspartate 240 is a catalytic residue. The Proton donor role is filled by histidine 267.

It belongs to the peptidase S33 family. Monomer.

The protein resides in the cytoplasm. The enzyme catalyses Release of N-terminal proline from a peptide.. With respect to regulation, completely inhibited by p-chloromercuribenzoate (PCMB) and heavy metal salts. Partially inhibited by proline and proline derivatives with proline as the amino terminus. Enzyme inactivated by PCMB is reactivated by incubation with 2-mercaptoethanol. Its function is as follows. Releases the N-terminal proline from various substrates including at least dipeptides Pro-Pro, Pro-Gln, Pro-Trp and Pro-Tyr. Also acts on amides (Pro-beta NA) and oligopeptides including Pro-Leu-GlyNH2, Pro-Leu-Gly, Pro-Phe-Gly-Lys, Pro-Pro-Ala-OBut and Pro-Pro-Gly-(Pro-Pro-Gly)(4). Higher activity toward small peptides (up to three residues), but very low activity for longer peptides. Has no activity against p-nitrophenyl acetate, poly_L-proline, Met-Pro or amino acyl amides other than Pro-betaNA (Pyr-betaNA, Phe-betaNA, Cys-betaNA, Met-betaNA, Leu-betaNA, Ala-betaNA and Z-Gly-Pro-betaNA). This Heyndrickxia coagulans (Weizmannia coagulans) protein is Proline iminopeptidase (pip).